The following is a 294-amino-acid chain: Pyridoxal 5'-phosphate synthase subunit PdxS (294 aa).

Aspartate 24 contributes to the D-ribose 5-phosphate binding site. Lysine 81 functions as the Schiff-base intermediate with D-ribose 5-phosphate in the catalytic mechanism. Glycine 153 contributes to the D-ribose 5-phosphate binding site. Arginine 165 contacts D-glyceraldehyde 3-phosphate. Residues glycine 214 and 235–236 each bind D-ribose 5-phosphate; that span reads GS.

It belongs to the PdxS/SNZ family. As to quaternary structure, homohexamer and homododecamer. In the presence of PdxT, forms a dodecamer of heterodimers.

It catalyses the reaction aldehydo-D-ribose 5-phosphate + D-glyceraldehyde 3-phosphate + L-glutamine = pyridoxal 5'-phosphate + L-glutamate + phosphate + 3 H2O + H(+). Its pathway is cofactor biosynthesis; pyridoxal 5'-phosphate biosynthesis. Functionally, catalyzes the formation of pyridoxal 5'-phosphate from ribose 5-phosphate (RBP), glyceraldehyde 3-phosphate (G3P) and ammonia. The ammonia is provided by the PdxT subunit. Can also use ribulose 5-phosphate and dihydroxyacetone phosphate as substrates, resulting from enzyme-catalyzed isomerization of RBP and G3P, respectively. The polypeptide is Pyridoxal 5'-phosphate synthase subunit PdxS (Geobacillus kaustophilus (strain HTA426)).